The sequence spans 599 residues: ATP-binding cassette sub-family E member 1 (599 aa).

4Fe-4S ferredoxin-type domains follow at residues 7–37 and 46–75; these read RIAIVNHDKCKPKKCRQECKKSCPVVRMGKL and KIAWISETLCIGCGICIKKCPFGALSIVNL. Residue lysine 20 forms a Glycyl lysine isopeptide (Lys-Gly) (interchain with G-Cter in ubiquitin) linkage. 2 consecutive ABC transporter domains span residues 79–315 and 342–562; these read LEKE…FLDG and VKKM…LSQL. Residues 110–117 and 379–386 contribute to the ATP site; these read GTNGIGKS and GENGTGKT. Position 417 is a phosphoserine (serine 417). Phosphothreonine is present on threonine 550.

Belongs to the ABC transporter superfamily. ABCE family. In terms of assembly, (Microbial infection) Interacts with Chandipura virus matrix protein. As to quaternary structure, interacts with PINK1. Interacts with CNOT4. Interacts with PELO. Probably heterodimerizes with RNASEL; this interaction inhibits RNASEL. (Microbial infection) Interacts with HIV-1 proteins Vif and Gag. In terms of assembly, (Microbial infection) Interacts with HIV-2 protein Gag. In terms of processing, ubiquitinated by CNOT4. Ubiquitination mediates the recruitment of autophagy receptors to the mitochondrial outer membrane and initiates mitophagy.

The protein resides in the cytoplasm. It localises to the mitochondrion. The catalysed reaction is GTP + H2O = GDP + phosphate + H(+). It catalyses the reaction ATP + H2O = ADP + phosphate + H(+). It carries out the reaction CTP + H2O = CDP + phosphate + H(+). The enzyme catalyses UTP + H2O = UDP + phosphate + H(+). Nucleoside-triphosphatase (NTPase) involved in ribosome recycling by mediating ribosome disassembly. Able to hydrolyze ATP, GTP, UTP and CTP. Splits ribosomes into free 60S subunits and tRNA- and mRNA-bound 40S subunits. Acts either after canonical termination facilitated by release factors (ETF1/eRF1) or after recognition of stalled and vacant ribosomes by mRNA surveillance factors (PELO/Pelota). Involved in the No-Go Decay (NGD) pathway: recruited to stalled ribosomes by the Pelota-HBS1L complex, and drives the disassembly of stalled ribosomes, followed by degradation of damaged mRNAs as part of the NGD pathway. Also plays a role in quality control of translation of mitochondrial outer membrane-localized mRNA. As part of the PINK1-regulated signaling, ubiquitinated by CNOT4 upon mitochondria damage; this modification generates polyubiquitin signals that recruit autophagy receptors to the mitochondrial outer membrane and initiate mitophagy. RNASEL-specific protein inhibitor which antagonizes the binding of 2-5A (5'-phosphorylated 2',5'-linked oligoadenylates) to RNASEL. Negative regulator of the anti-viral effect of the interferon-regulated 2-5A/RNASEL pathway. Its function is as follows. (Microbial infection) May act as a chaperone for post-translational events during HIV-1 capsid assembly. Functionally, (Microbial infection) Plays a role in the down-regulation of the 2-5A/RNASEL pathway during encephalomyocarditis virus (EMCV) and HIV-1 infections. This chain is ATP-binding cassette sub-family E member 1 (ABCE1), found in Homo sapiens (Human).